The primary structure comprises 274 residues: Putative outer membrane protein CPn_1073/CP_0776/CPj1073/CpB1118 (274 aa).

Residues M1–A21 form the signal peptide.

Its subcellular location is the cell outer membrane. This Chlamydia pneumoniae (Chlamydophila pneumoniae) protein is Putative outer membrane protein CPn_1073/CP_0776/CPj1073/CpB1118.